The following is a 301-amino-acid chain: MAHFTLDTFTFNKDVRKVSFGEYNIRPPLIKPSKLTYVENGGVGKELSDGWALNFAIGCIHACPFCYVDNIHKRFTFARVGDVVQRPWGMYFLKPRNIDEAIKKTPWKRWKGKLVMMSSTHDPYLPQLYPTSRKILEKALPAGVKFLIQTRSVLVTKDLDLLSEYKDQVILQVSIATLEEKFASIIEPRAPPPKARLEVLRKAKEVGLKVGVIVAPIFPPNKVREDVKEDLEMIMKELADIGVDQVFGEMLHERGMNMEYIESLLWEKVKIDKELDEELGKMFTELLNKYHLRGKWWYEKH.

The Radical SAM core domain maps to 45 to 286 (KELSDGWALN…EELGKMFTEL (242 aa)).

This is an uncharacterized protein from Acidianus two-tailed virus (ATV).